Reading from the N-terminus, the 196-residue chain is Nucleoside triphosphate pyrophosphatase (196 aa).

D73 functions as the Proton acceptor in the catalytic mechanism.

Belongs to the Maf family. A divalent metal cation is required as a cofactor.

Its subcellular location is the cytoplasm. The catalysed reaction is a ribonucleoside 5'-triphosphate + H2O = a ribonucleoside 5'-phosphate + diphosphate + H(+). It carries out the reaction a 2'-deoxyribonucleoside 5'-triphosphate + H2O = a 2'-deoxyribonucleoside 5'-phosphate + diphosphate + H(+). In terms of biological role, nucleoside triphosphate pyrophosphatase. May have a dual role in cell division arrest and in preventing the incorporation of modified nucleotides into cellular nucleic acids. The sequence is that of Nucleoside triphosphate pyrophosphatase from Anaplasma marginale (strain St. Maries).